A 765-amino-acid polypeptide reads, in one-letter code: Zinc finger and BTB domain-containing protein 49 (765 aa).

The BTB domain occupies 25-91 (CDCMLVVKGV…MYTSHLDLNQ (67 aa)). Disordered regions lie at residues 165–203 (QQNK…GSCT) and 275–294 (NFLA…DATC). 7 consecutive C2H2-type zinc fingers follow at residues 395–417 (YACE…KRSH), 423–445 (FECN…LRRH), 451–473 (YICE…IIIH), 479–501 (HLCD…KKTH), 507–529 (FTCD…RIRH), 535–557 (YSCS…VRTH), and 563–585 (YTCE…KKMH).

The protein belongs to the krueppel C2H2-type zinc-finger protein family. As to quaternary structure, isoform 1 interacts with EP300 and KAT5/Tip60. The interaction with EP300 is direct and leads to synergistic induction of CDKN1A. On the CDKN1A promoter, forms a complex with ZBTB17/Miz-1; this interaction leads to additive CDKN1A transactivation. Isoform 3 also interacts with ZBTB17; this interaction may block ZBTB17 repressor activity. Highly expressed in normal epidermis and in other epithelial tissues, including in colon and lung. Tends to be down-regulated in colon, lung and skin cancer tissues.

It localises to the cytoplasm. The protein resides in the nucleus. Functionally, transcription factor. Inhibits cell proliferation by activating either CDKN1A/p21 transcription or RB1 transcription. Binds CDKN1A promoter and activates its transcription; this activity is further potentiated in the presence of EP300 (synergistic) and ZBTB17/Miz-1 (additive). Its function is as follows. Activates RB1 transcription most probably by antagonizing ZBTB17 repression of RB1. Does not bind directly RB1 promoter. In Homo sapiens (Human), this protein is Zinc finger and BTB domain-containing protein 49 (ZBTB49).